The sequence spans 432 residues: ATP-dependent RNA helicase RhlB (432 aa).

The Q motif signature appears at 9–37 (QRFADLPLHAEVIQALNENGFEFCTPIQA). In terms of domain architecture, Helicase ATP-binding spans 40–219 (LPVLLKAKDI…YDHMNDPEKV (180 aa)). Residue 53-60 (AQTGTGKT) coordinates ATP. Residues 165 to 168 (DEAD) carry the DEAD box motif. The Helicase C-terminal domain maps to 243–390 (KMRLLLTLME…VSRYDREALL (148 aa)). The tract at residues 395 to 432 (TPVKIHRKHPTSRTRDGAKGAHRSGGARPPRHRTRRPS) is disordered. The span at 423–432 (PPRHRTRRPS) shows a compositional bias: basic residues.

Belongs to the DEAD box helicase family. RhlB subfamily. As to quaternary structure, component of the RNA degradosome, which is a multiprotein complex involved in RNA processing and mRNA degradation.

Its subcellular location is the cytoplasm. The enzyme catalyses ATP + H2O = ADP + phosphate + H(+). Its function is as follows. DEAD-box RNA helicase involved in RNA degradation. Has RNA-dependent ATPase activity and unwinds double-stranded RNA. This chain is ATP-dependent RNA helicase RhlB, found in Shewanella denitrificans (strain OS217 / ATCC BAA-1090 / DSM 15013).